The following is a 401-amino-acid chain: G2/mitotic-specific cyclin-B1 (401 aa).

Belongs to the cyclin family. Cyclin AB subfamily. Interacts with the CDK1 protein kinase to form a serine/threonine kinase holoenzyme complex also known as maturation promoting factor (MPF). The cyclin subunit imparts substrate specificity to the complex.

Essential for the control of the cell cycle at the G2/M (mitosis) transition. This is G2/mitotic-specific cyclin-B1 (ccnb1) from Oryzias luzonensis (Luzon ricefish).